Here is a 341-residue protein sequence, read N- to C-terminus: Major histocompatibility complex class I-related protein 1 (341 aa).

The first 22 residues, 1 to 22 (MGELMAFLLPLIIVLMVKHSDS), serve as a signal peptide directing secretion. The segment at 23–109 (RTHSLRYFRL…KRLQRHYNHS (87 aa)) is alpha-1. Residues 23–201 (RTHSLRYFRL…EYGKDTLQRT (179 aa)) form an antigen-binding cleft region. Residues 23-302 (RTHSLRYFRL…QESETIPLVM (280 aa)) lie on the Extracellular side of the membrane. 3 residues coordinate 5-(2-oxoethylideneamino)-6-(D-ribitylamino)uracil: arginine 31, serine 46, and lysine 65. 5-(2-oxopropylideneamino)-6-(D-ribitylamino)uracil contacts are provided by arginine 31, serine 46, and lysine 65. Residues arginine 31, serine 46, and lysine 65 each contribute to the 7-hydroxy-6-methyl-8-(1-D-ribityl)lumazine site. Arginine 31 lines the 8-(9H-purin-6-yl)-2-oxa-8-azabicyclo[3.3.1]nona-3,6-diene-4,6-dicarbaldehyde pocket. 8-(9H-purin-6-yl)-2-oxa-8-azabicyclo[3.3.1]nona-3,6-diene-4,6-dicarbaldehyde contacts are provided by lysine 65 and histidine 80. Lysine 65 is a 2-amino-4-oxopteridine-6-carbaldehyde binding site. Lysine 65 contributes to the pyridoxal binding site. N-linked (GlcNAc...) asparagine glycosylation is present at asparagine 107. The segment at 110-201 (GSHTYQRMIG…EYGKDTLQRT (92 aa)) is alpha-2. 3 residues coordinate 5-(2-oxoethylideneamino)-6-(D-ribitylamino)uracil: arginine 116, tyrosine 174, and glutamine 175. 5-(2-oxopropylideneamino)-6-(D-ribitylamino)uracil is bound by residues arginine 116, tyrosine 174, and glutamine 175. 3 residues coordinate 7-hydroxy-6-methyl-8-(1-D-ribityl)lumazine: arginine 116, tyrosine 174, and glutamine 175. Arginine 116 lines the 8-(9H-purin-6-yl)-2-oxa-8-azabicyclo[3.3.1]nona-3,6-diene-4,6-dicarbaldehyde pocket. Disulfide bonds link cysteine 120–cysteine 183 and cysteine 222–cysteine 278. An alpha-3 region spans residues 202–293 (EPPLVRVNRK…GVHMVLQVPQ (92 aa)). Residues 203 to 299 (PPLVRVNRKE…QVPQESETIP (97 aa)) form the Ig-like C1-type domain. Positions 294–302 (ESETIPLVM) are connecting peptide. A helical membrane pass occupies residues 303-323 (KAVSGSIVLVIVLAGVGVLVW). Topologically, residues 324–341 (RRRPREQNGAIYLPTPDR) are cytoplasmic.

Belongs to the MHC class I family. In terms of assembly, heterotrimer that consists of MR1, B2M and a metabolite antigen. Major classes of metabolite ligands presented by MR1 include riboflavin-related antigens, pyrimidines and ribityl lumazines, nucleobase adducts and folate derivatives. Forms reversible covalent Schiff base complexes with microbial pyrimidine-based metabolite, which serves as a molecular switch triggering complete folding, stable association with B2M and translocation of the ternary complex from endoplasmic reticulum to the plasma membrane. Alternatively, forms non-Schiff base complexes with ribityl lumazines. On antigen-presenting cells, the ternary complex interacts with TCR on MR1-restricted T cells, predominantly represented by CD8-positive and CD4- and CD8-double negative MAIT cell subsets. Interacts with TAPBP and TAPBPL chaperones in the endoplasmic reticulum. TAPBP associated or not with MHC class I peptide loading complex binds ligand-free MR1 or MR1-B2M complex, providing for stable MR1 pools ready for metabolite antigen processing. TAPBPL interacts with MR1 in a ligand-independent way; this interaction may stabilize MR1 pool and facilitate ligand loading and dissociation. MR1-B2M heterodimer adopts a topology similar to classical MHC class I molecules, with alpha-1 and alpha-2 domains of MR1 forming the antigen-binding cleft composed of two alpha-helices resting on a floor of 7-stranded anti-parallel beta-pleated sheet. The ribityl moiety of pyrimidine-based antigens is recognized by Tyr-95 residue in the CDR3 alpha loop of the invariant TRAV1-2 TCR. As to quaternary structure, homodimerizes and does not associate with B2M. Post-translationally, N-glycosylated. As to expression, ubiquitous. Low expression is detected in peripheral blood B cells, T cells, monocytes and in bronchial epithelial cells (at protein level). Expressed in plasmablasts or plasma B cells in the lamina propria of ileum, appendix and colon (at protein level). Highly expressed on a subset of CD45-positive CD3-positive thymocytes (at protein level).

It is found in the cell membrane. It localises to the endoplasmic reticulum membrane. Its subcellular location is the golgi apparatus membrane. The protein resides in the early endosome membrane. The protein localises to the late endosome membrane. It is found in the secreted. Its activity is regulated as follows. Inhibited by pterin-based metabolites such as 6-formylpterin (6-FP, a product of folic acid photodegradation). 6-FP competitively inhibits MAIT cell activation by 5-OP-RU. Modulated by commonly prescribed anti-inflammatory drug metabolites. Inhibited by salicilates such as 3-formylsalicylic and 5-formylsalicylic acids. Activated by diclofenac and/or its hydroxy metabolites. Functionally, antigen-presenting molecule specialized in displaying microbial pyrimidine-based metabolites to alpha-beta T cell receptors (TCR) on innate-type mucosal-associated invariant T (MAIT) cells. In complex with B2M preferentially presents riboflavin-derived metabolites to semi-invariant TRAV1.2 TCRs on MAIT cells, guiding immune surveillance of the microbial metabolome at mucosal epithelial barriers. Signature pyrimidine-based microbial antigens are generated via non-enzymatic condensation of metabolite intermediates of the riboflavin pathway with by-products arising from other metabolic pathways such as glycolysis. Typical potent antigenic metabolites are 5-(2-oxoethylideneamino)-6-D-ribitylaminouracil (5-OE-RU) and 5-(2-oxopropylideneamino)-6-D-ribitylaminouracil (5-OP-RU), products of condensation of 5-amino-6-D-ribityaminouracil (5-A-RU) with glyoxal or methylglyoxal by-products, respectively. May present microbial antigens to various TRAV1-2-negative MAIT cell subsets, providing for unique recognition of diverse microbes, including pathogens that do not synthesize riboflavin. Upon antigen recognition, elicits rapid innate-type MAIT cell activation to eliminate pathogenic microbes by directly killing infected cells. During T cell development, drives thymic selection and post-thymic terminal differentiation of MAIT cells in a process dependent on commensal microflora. Acts as an immune sensor of cancer cell metabolome. May present a tumor-specific or -associated metabolite essential for cancer cell survival to a 'pan-cancer' TCR consisting of TRAV38.2-DV8*TRAJ31 alpha chain paired with a TRBV25.1*TRBJ2.3 beta chain on a non-MAIT CD8-positive T cell clone (MC.7.G5), triggering T cell-mediated killing of a wide range of cancer cell types. Allele MR1*01: Presents microbial-derived metabolite 5-OP-RU to semi-invariant TRAV1.2-TRAJ33-TRBV6.1 (A-F7) TCR on MAIT cells. Presents nucleobase carbonyl adducts generated during oxidative stress. Captures M3Ade, a nucleobase adduct composed of one adenine modified by a malondialdehyde trimer, for recognition by MR1-restricted T cell clones expressing a polyclonal TCR repertoire. Displays moderate binding affinity toward tumor-enriched pyridoxal and pyridoxal 5'-phosphate antigens. In terms of biological role, allele MR1*04: Presents tumor-enriched metabolite pyridoxal to pan-cancer 7.G5 TCR on T cells enabling preferential recognition of cancer cells. May act as an alloantigen. This is Major histocompatibility complex class I-related protein 1 from Homo sapiens (Human).